A 476-amino-acid polypeptide reads, in one-letter code: Eukaryotic translation initiation factor 3 subunit L (476 aa).

Residues 257-452 (DAIRMFSHIL…DLDYALENDL (196 aa)) enclose the PCI domain.

The protein belongs to the eIF-3 subunit L family. In terms of assembly, component of the eukaryotic translation initiation factor 3 (eIF-3) complex.

It is found in the cytoplasm. Component of the eukaryotic translation initiation factor 3 (eIF-3) complex, which is involved in protein synthesis of a specialized repertoire of mRNAs and, together with other initiation factors, stimulates binding of mRNA and methionyl-tRNAi to the 40S ribosome. The eIF-3 complex specifically targets and initiates translation of a subset of mRNAs involved in cell proliferation. This chain is Eukaryotic translation initiation factor 3 subunit L, found in Aspergillus oryzae (strain ATCC 42149 / RIB 40) (Yellow koji mold).